The following is a 485-amino-acid chain: Glutamyl-tRNA(Gln) amidotransferase subunit A (485 aa).

Catalysis depends on charge relay system residues Lys74 and Ser149. Ser173 functions as the Acyl-ester intermediate in the catalytic mechanism.

Belongs to the amidase family. GatA subfamily. As to quaternary structure, heterotrimer of A, B and C subunits.

The catalysed reaction is L-glutamyl-tRNA(Gln) + L-glutamine + ATP + H2O = L-glutaminyl-tRNA(Gln) + L-glutamate + ADP + phosphate + H(+). In terms of biological role, allows the formation of correctly charged Gln-tRNA(Gln) through the transamidation of misacylated Glu-tRNA(Gln) in organisms which lack glutaminyl-tRNA synthetase. The reaction takes place in the presence of glutamine and ATP through an activated gamma-phospho-Glu-tRNA(Gln). The polypeptide is Glutamyl-tRNA(Gln) amidotransferase subunit A (Herminiimonas arsenicoxydans).